Consider the following 652-residue polypeptide: Acetyl-coenzyme A synthetase (652 aa).

CoA is bound by residues Arg-191 to Arg-194, Thr-311, and Asn-335. Residues Gly-387–Pro-389, Asp-411–Thr-416, Asp-500, and Arg-515 contribute to the ATP site. A CoA-binding site is contributed by Ser-523. An ATP-binding site is contributed by Arg-526. 3 residues coordinate Mg(2+): Val-537, His-539, and Ile-542. Arg-584 is a binding site for CoA. Lys-609 is modified (N6-acetyllysine; by Pat).

This sequence belongs to the ATP-dependent AMP-binding enzyme family. In terms of assembly, monomer. Requires Mg(2+) as cofactor. In terms of processing, acetylated. Deacetylation by the SIR2-homolog deacetylase activates the enzyme.

It catalyses the reaction acetate + ATP + CoA = acetyl-CoA + AMP + diphosphate. In terms of biological role, catalyzes the conversion of acetate into acetyl-CoA (AcCoA), an essential intermediate at the junction of anabolic and catabolic pathways. Acs undergoes a two-step reaction. In the first half reaction, Acs combines acetate with ATP to form acetyl-adenylate (AcAMP) intermediate. In the second half reaction, it can then transfer the acetyl group from AcAMP to the sulfhydryl group of CoA, forming the product AcCoA. Required for acetate recapture but not for acetate excretion when this organism is grown on ethanolamine. Functionally, enables the cell to use acetate during aerobic growth to generate energy via the TCA cycle, and biosynthetic compounds via the glyoxylate shunt. Acetylates CheY, the response regulator involved in flagellar movement and chemotaxis. This is Acetyl-coenzyme A synthetase from Salmonella typhimurium (strain LT2 / SGSC1412 / ATCC 700720).